Consider the following 201-residue polypeptide: NADH-quinone oxidoreductase subunit I (201 aa).

4Fe-4S ferredoxin-type domains follow at residues M78–A107 and K116–I147. [4Fe-4S] cluster contacts are provided by C87, C90, C93, C97, C127, C130, C133, and C137.

It belongs to the complex I 23 kDa subunit family. In terms of assembly, NDH-1 is composed of 14 different subunits. Subunits NuoA, H, J, K, L, M, N constitute the membrane sector of the complex. [4Fe-4S] cluster serves as cofactor.

It is found in the cell inner membrane. It carries out the reaction a quinone + NADH + 5 H(+)(in) = a quinol + NAD(+) + 4 H(+)(out). In terms of biological role, NDH-1 shuttles electrons from NADH, via FMN and iron-sulfur (Fe-S) centers, to quinones in the respiratory chain. The immediate electron acceptor for the enzyme in this species is believed to be ubiquinone. Couples the redox reaction to proton translocation (for every two electrons transferred, four hydrogen ions are translocated across the cytoplasmic membrane), and thus conserves the redox energy in a proton gradient. The polypeptide is NADH-quinone oxidoreductase subunit I (Aquifex aeolicus (strain VF5)).